Here is a 233-residue protein sequence, read N- to C-terminus: Large ribosomal subunit protein uL1 (233 aa).

This sequence belongs to the universal ribosomal protein uL1 family. As to quaternary structure, part of the 50S ribosomal subunit.

In terms of biological role, binds directly to 23S rRNA. The L1 stalk is quite mobile in the ribosome, and is involved in E site tRNA release. Functionally, protein L1 is also a translational repressor protein, it controls the translation of the L11 operon by binding to its mRNA. This Photorhabdus laumondii subsp. laumondii (strain DSM 15139 / CIP 105565 / TT01) (Photorhabdus luminescens subsp. laumondii) protein is Large ribosomal subunit protein uL1.